The following is a 406-amino-acid chain: MAAALQTNIRPVKFPATLRALTKQSSPAPFRVRCAAASPGKKRYNITLLPGDGIGPEVISIAKNVLQQAGSLEGLEFSFQEMPVGGAALDLVGVPLPEETVSAAKESDAVLLGAIGGYKWDKNEKHLKPETGLLQLRAGLKVFANLRPATVLPQLVDASTLKREVAEGVDLMVVRELTGGIYFGVPRGIKTNENGEEVGYNTEVYAAHEIDRIARVAFETARKRRGKLCSVDKANVLDASILWRRRVTALAAEYPDVELSHMYVDNAAMQLVRDPKQFDTIVTNNIFGDILSDEASMITGSIGMLPSASLSDSGPGLFEPIHGSAPDIAGQDKANPLATILSAAMLLKYGLGEEKAAKRIEDAVLGALNKGFRTGDIYSAGTKLVGCKEMGEEVLKSVDSHVQASV.

The transit peptide at 1-34 directs the protein to the chloroplast; it reads MAAALQTNIRPVKFPATLRALTKQSSPAPFRVRC. S71 is subject to Phosphoserine. Residue 117 to 130 coordinates NAD(+); it reads GYKWDKNEKHLKPE. Positions 137, 147, 175, and 265 each coordinate substrate. Positions 265, 289, and 293 each coordinate Mg(2+). An NAD(+)-binding site is contributed by 323 to 335; the sequence is GSAPDIAGQDKAN.

This sequence belongs to the isocitrate and isopropylmalate dehydrogenases family. In terms of assembly, homodimer. Mg(2+) is required as a cofactor. Requires Mn(2+) as cofactor.

The protein localises to the plastid. It is found in the chloroplast. It catalyses the reaction (2R,3S)-3-isopropylmalate + NAD(+) = 4-methyl-2-oxopentanoate + CO2 + NADH. It participates in amino-acid biosynthesis; L-leucine biosynthesis; L-leucine from 3-methyl-2-oxobutanoate: step 3/4. Catalyzes the oxidation of 3-carboxy-2-hydroxy-4-methylpentanoate (3-isopropylmalate) to 3-carboxy-4-methyl-2-oxopentanoate. The product decarboxylates to 4-methyl-2 oxopentanoate. The protein is 3-isopropylmalate dehydrogenase, chloroplastic of Brassica napus (Rape).